Here is a 147-residue protein sequence, read N- to C-terminus: Large ribosomal subunit protein uL15 (147 aa).

The span at 1–20 (MTLRLNDLKPADGARTERTR) shows a compositional bias: basic and acidic residues. Residues 1 to 61 (MTLRLNDLKP…GFEGGQTPMQ (61 aa)) form a disordered region. Residues 23–33 (RGIGSGLGKTA) are compositionally biased toward gly residues. Residues 34-47 (GRGHKGSFARKGGG) show a composition bias toward basic residues.

The protein belongs to the universal ribosomal protein uL15 family. Part of the 50S ribosomal subunit.

Binds to the 23S rRNA. In Xanthomonas axonopodis pv. citri (strain 306), this protein is Large ribosomal subunit protein uL15.